Here is a 75-residue protein sequence, read N- to C-terminus: Conotoxin VnMKLT2-012 (75 aa).

The signal sequence occupies residues 1–23 (MMKLTCVLIIAVLFLTACQLTTA). Positions 24 to 45 (ETRDEYRAVRSSDEVRNSRSTR) are excised as a propeptide. A compositionally biased stretch (basic and acidic residues) spans 31–45 (AVRSSDEVRNSRSTR). Positions 31–50 (AVRSSDEVRNSRSTRDCSGS) are disordered. Disulfide bonds link Cys-47-Cys-60, Cys-54-Cys-65, and Cys-59-Cys-74.

Belongs to the conotoxin O1 superfamily. Expressed by the venom duct.

The protein localises to the secreted. The chain is Conotoxin VnMKLT2-012 from Conus ventricosus (Mediterranean cone).